A 737-amino-acid polypeptide reads, in one-letter code: Catalase-peroxidase (737 aa).

Positions 1–23 (MLKKILPVLITLAIVHNTPTAWA) are cleaved as a signal peptide. Positions 102–223 (WHGAGTYRIY…LAATQMGLIY (122 aa)) form a cross-link, tryptophyl-tyrosyl-methioninium (Trp-Tyr) (with M-249). The active-site Proton acceptor is the His-103. Positions 223–249 (YVNPEGPNGKPDPVAAAKDIREAFARM) form a cross-link, tryptophyl-tyrosyl-methioninium (Tyr-Met) (with W-102). His-264 is a binding site for heme b.

This sequence belongs to the peroxidase family. Peroxidase/catalase subfamily. Homodimer or homotetramer. Heme b serves as cofactor. Post-translationally, formation of the three residue Trp-Tyr-Met cross-link is important for the catalase, but not the peroxidase activity of the enzyme.

The catalysed reaction is H2O2 + AH2 = A + 2 H2O. It catalyses the reaction 2 H2O2 = O2 + 2 H2O. Functionally, bifunctional enzyme with both catalase and broad-spectrum peroxidase activity. The chain is Catalase-peroxidase from Yersinia pseudotuberculosis serotype O:3 (strain YPIII).